Reading from the N-terminus, the 164-residue chain is Pyruvoyl-dependent arginine decarboxylase (164 aa).

Residue Ser52 is modified to Pyruvic acid (Ser).

Belongs to the PdaD family. Pyruvate serves as cofactor.

The enzyme catalyses L-arginine + H(+) = agmatine + CO2. In Methanococcus maripaludis (strain C6 / ATCC BAA-1332), this protein is Pyruvoyl-dependent arginine decarboxylase.